The chain runs to 234 residues: 2,3,4,5-tetrahydropyridine-2,6-dicarboxylate N-acetyltransferase (234 aa).

This sequence belongs to the transferase hexapeptide repeat family. DapH subfamily.

The enzyme catalyses (S)-2,3,4,5-tetrahydrodipicolinate + acetyl-CoA + H2O = L-2-acetamido-6-oxoheptanedioate + CoA. It functions in the pathway amino-acid biosynthesis; L-lysine biosynthesis via DAP pathway; LL-2,6-diaminopimelate from (S)-tetrahydrodipicolinate (acetylase route): step 1/3. In terms of biological role, catalyzes the transfer of an acetyl group from acetyl-CoA to tetrahydrodipicolinate. In Ligilactobacillus salivarius (strain UCC118) (Lactobacillus salivarius), this protein is 2,3,4,5-tetrahydropyridine-2,6-dicarboxylate N-acetyltransferase.